The following is a 398-amino-acid chain: MKRSVRPLFSALLFAFFAATLICRVAIRRSSFSFASAIAELGSSGLMTEDIVFNETLLEFAAIDPGEPNFKQEVDLISDYDHTRRSHRRHFSSMSIRPSEQQRRVSRDIASSSKFPVTLRSSQAYRYWSEFKRNLRLWARRRAYEPNIMLDLIRLVKNPIDVHNGVVSISSERYLSCAVVGNSGTLLNSQYGDLIDKHEIVIRLNNAKTERFEKKVGSKTNISFINSNILHQCGRRESCYCHPYGETVPIVMYICQPIHVLDYTLCKPSHRAPLLITDPRFDVMCARIVKYYSVKKFLEEKKAKGFVDWSKDHEGSLFHYSSGMQAVMLAVGICEKVSVFGFGKLNSTKHHYHTNQKAELKLHDYEAEYRLYRDLENSPRAIPFLPKEFKIPLVQVYH.

The Cytoplasmic segment spans residues 1 to 6 (MKRSVR). A helical; Signal-anchor for type II membrane protein transmembrane segment spans residues 7-27 (PLFSALLFAFFAATLICRVAI). Over 28 to 398 (RRSSFSFASA…FKIPLVQVYH (371 aa)) the chain is Lumenal. 2 N-linked (GlcNAc...) asparagine glycosylation sites follow: Asn221 and Asn346.

This sequence belongs to the glycosyltransferase 29 family. In terms of assembly, interacts with GALT31A.

Its subcellular location is the golgi apparatus membrane. In terms of biological role, galactosyltransferase involved in the biosynthesis of type II arabinogalactan. Possesses galactosyltransferase (GalT) activity in vitro, transferring galactose from UDP-galactose to a mixture of various oligosaccharides derived from arabinogalactan proteins. Forms a complex with GALT31A that can work cooperatively to enhance the activities of adding galactose residues at O6 positions to beta-1,6-galactan and beta-1,3-galactan. This Arabidopsis thaliana (Mouse-ear cress) protein is Beta-1,6-galactosyltransferase GALT29A.